The following is a 185-amino-acid chain: Large ribosomal subunit protein uL16m (185 aa).

This sequence belongs to the universal ribosomal protein uL16 family.

It is found in the mitochondrion. This chain is Large ribosomal subunit protein uL16m (RPL16), found in Zea mays (Maize).